The following is a 262-amino-acid chain: Hydroxyethylthiazole kinase (262 aa).

Residue M43 coordinates substrate. ATP is bound by residues R118 and T164. A191 is a substrate binding site.

The protein belongs to the Thz kinase family. Requires Mg(2+) as cofactor.

It catalyses the reaction 5-(2-hydroxyethyl)-4-methylthiazole + ATP = 4-methyl-5-(2-phosphooxyethyl)-thiazole + ADP + H(+). The protein operates within cofactor biosynthesis; thiamine diphosphate biosynthesis; 4-methyl-5-(2-phosphoethyl)-thiazole from 5-(2-hydroxyethyl)-4-methylthiazole: step 1/1. Its function is as follows. Catalyzes the phosphorylation of the hydroxyl group of 4-methyl-5-beta-hydroxyethylthiazole (THZ). The protein is Hydroxyethylthiazole kinase of Cereibacter sphaeroides (strain ATCC 17029 / ATH 2.4.9) (Rhodobacter sphaeroides).